A 105-amino-acid chain; its full sequence is MSAVIKHSEERLMKVLLAPVISEKATFVAEKNEQVVFLVMPDATKLEIKAAVELLFKVQVESVQVANRQGKQKRSGRFNGRRNHTRRAFVCLKPGQEINFTEEAK.

Belongs to the universal ribosomal protein uL23 family. Part of the 50S ribosomal subunit. Contacts protein L29, and trigger factor when it is bound to the ribosome.

Its function is as follows. One of the early assembly proteins it binds 23S rRNA. One of the proteins that surrounds the polypeptide exit tunnel on the outside of the ribosome. Forms the main docking site for trigger factor binding to the ribosome. In Herminiimonas arsenicoxydans, this protein is Large ribosomal subunit protein uL23.